The sequence spans 348 residues: Ion-translocating oxidoreductase complex subunit D (348 aa).

Transmembrane regions (helical) follow at residues 23–43 (WVLA…GYGT), 44–64 (LIQL…IMLL), 72–91 (ALRD…AIPP), and 126–146 (IAYV…MAPI). Residue Thr-187 is modified to FMN phosphoryl threonine. The next 5 membrane-spanning stretches (helical) occupy residues 214–234 (FAGI…LILL), 243–263 (IPMA…LFAP), 266–286 (TASP…FFIA), 300–320 (LIYG…GGFP), and 321–341 (DGVA…DYYT).

It belongs to the NqrB/RnfD family. As to quaternary structure, the complex is composed of six subunits: RnfA, RnfB, RnfC, RnfD, RnfE and RnfG. FMN serves as cofactor.

It is found in the cell inner membrane. Part of a membrane-bound complex that couples electron transfer with translocation of ions across the membrane. The chain is Ion-translocating oxidoreductase complex subunit D from Vibrio cholerae serotype O1 (strain ATCC 39315 / El Tor Inaba N16961).